The chain runs to 660 residues: Bifunctional polymyxin resistance protein ArnA (660 aa).

The formyltransferase ArnAFT stretch occupies residues 1 to 304 (MKTVVFAYHD…TLGLVQGSRL (304 aa)). 86-88 (HLI) is a (6R)-10-formyltetrahydrofolate binding site. The Proton donor; for formyltransferase activity role is filled by histidine 104. (6R)-10-formyltetrahydrofolate is bound by residues arginine 114 and 136-140 (VKRAD). A dehydrogenase ArnADH region spans residues 314-660 (RRTRVLILGV…RTVDLTDKPS (347 aa)). Residues aspartate 347 and 368–369 (DI) each bind NAD(+). UDP-alpha-D-glucuronate-binding positions include alanine 393, tyrosine 398, and 432-433 (TS). Glutamate 434 acts as the Proton acceptor; for decarboxylase activity in catalysis. Residues arginine 460, asparagine 492, 526–535 (KLIDGGKQKR), and tyrosine 613 contribute to the UDP-alpha-D-glucuronate site. Arginine 619 functions as the Proton donor; for decarboxylase activity in the catalytic mechanism.

It in the N-terminal section; belongs to the Fmt family. UDP-L-Ara4N formyltransferase subfamily. This sequence in the C-terminal section; belongs to the NAD(P)-dependent epimerase/dehydratase family. UDP-glucuronic acid decarboxylase subfamily. In terms of assembly, homohexamer, formed by a dimer of trimers.

The enzyme catalyses UDP-alpha-D-glucuronate + NAD(+) = UDP-beta-L-threo-pentopyranos-4-ulose + CO2 + NADH. It carries out the reaction UDP-4-amino-4-deoxy-beta-L-arabinose + (6R)-10-formyltetrahydrofolate = UDP-4-deoxy-4-formamido-beta-L-arabinose + (6S)-5,6,7,8-tetrahydrofolate + H(+). The protein operates within nucleotide-sugar biosynthesis; UDP-4-deoxy-4-formamido-beta-L-arabinose biosynthesis; UDP-4-deoxy-4-formamido-beta-L-arabinose from UDP-alpha-D-glucuronate: step 1/3. It participates in nucleotide-sugar biosynthesis; UDP-4-deoxy-4-formamido-beta-L-arabinose biosynthesis; UDP-4-deoxy-4-formamido-beta-L-arabinose from UDP-alpha-D-glucuronate: step 3/3. Its pathway is bacterial outer membrane biogenesis; lipopolysaccharide biosynthesis. In terms of biological role, bifunctional enzyme that catalyzes the oxidative decarboxylation of UDP-glucuronic acid (UDP-GlcUA) to UDP-4-keto-arabinose (UDP-Ara4O) and the addition of a formyl group to UDP-4-amino-4-deoxy-L-arabinose (UDP-L-Ara4N) to form UDP-L-4-formamido-arabinose (UDP-L-Ara4FN). The modified arabinose is attached to lipid A and is required for resistance to polymyxin and cationic antimicrobial peptides. This chain is Bifunctional polymyxin resistance protein ArnA, found in Escherichia coli (strain K12 / MC4100 / BW2952).